Consider the following 272-residue polypeptide: MKTVSQLIDMKQKQTKISMVTAYDFPSAKQVEAAGIDMILVGDSLGMTVLGYESTVQVTLADMIHHGRAVRRGAPNTFVVVDMPIGAVGISMTQDLNHALKLYQETSANAIKAEGAHITPFIEKATAIGIPVVAHLGLTPQSVGVMGYKLQGATKEAAEQLILDAKNVEQAGAVALVLEAIPNDLAEEISKHLTIPVIGIGAGKGTDGQVLVYHDMLNYGVEHKAKFVKQFADFSVGVDGLKQYDQEVKSGAFPSEEYTYKKKIMNEVNNND.

Mg(2+) contacts are provided by Asp43 and Asp82. 3-methyl-2-oxobutanoate is bound by residues 43–44 (DS), Asp82, and Lys112. Position 114 (Glu114) interacts with Mg(2+). Glu179 serves as the catalytic Proton acceptor.

The protein belongs to the PanB family. In terms of assembly, homodecamer; pentamer of dimers. Requires Mg(2+) as cofactor.

It localises to the cytoplasm. The enzyme catalyses 3-methyl-2-oxobutanoate + (6R)-5,10-methylene-5,6,7,8-tetrahydrofolate + H2O = 2-dehydropantoate + (6S)-5,6,7,8-tetrahydrofolate. The protein operates within cofactor biosynthesis; (R)-pantothenate biosynthesis; (R)-pantoate from 3-methyl-2-oxobutanoate: step 1/2. In terms of biological role, catalyzes the reversible reaction in which hydroxymethyl group from 5,10-methylenetetrahydrofolate is transferred onto alpha-ketoisovalerate to form ketopantoate. This Staphylococcus aureus (strain bovine RF122 / ET3-1) protein is 3-methyl-2-oxobutanoate hydroxymethyltransferase.